Here is a 362-residue protein sequence, read N- to C-terminus: Malate dehydrogenase (362 aa).

The protein belongs to the LDH2/MDH2 oxidoreductase family. As to quaternary structure, homodimer.

The protein localises to the cytoplasm. The catalysed reaction is (S)-malate + NAD(+) = oxaloacetate + NADH + H(+). This Pyrococcus abyssi (strain GE5 / Orsay) protein is Malate dehydrogenase (mdh).